Reading from the N-terminus, the 572-residue chain is Glypican-5 (572 aa).

The first 24 residues, 1-24 (MDARTWRLGWRCLLLLALLGSTRS), serve as a signal peptide directing secretion. N-linked (GlcNAc...) asparagine glycosylation is found at N120 and N237. The O-linked (Xyl...) (glycosaminoglycan) serine glycan is linked to S486. N-linked (GlcNAc...) asparagine glycosylation occurs at N493. O-linked (Xyl...) (glycosaminoglycan) serine glycosylation is found at S495, S507, and S509. Residue N527 is glycosylated (N-linked (GlcNAc...) asparagine).

Belongs to the glypican family.

It is found in the cell membrane. Its subcellular location is the secreted. The protein localises to the extracellular space. Functionally, cell surface proteoglycan that bears heparan sulfate. The chain is Glypican-5 (Gpc5) from Mus musculus (Mouse).